Here is a 131-residue protein sequence, read N- to C-terminus: Ribonuclease VapC13 (131 aa).

The PINc domain occupies 2–128 (ILVDSNIPMY…RGFDSYPGIK (127 aa)). Positions 5 and 99 each coordinate Mg(2+).

The protein belongs to the PINc/VapC protein family. The cofactor is Mg(2+).

Its subcellular location is the secreted. In terms of biological role, toxic component of a type II toxin-antitoxin (TA) system. An RNase. The cognate antitoxin is VapB13. The chain is Ribonuclease VapC13 from Mycobacterium tuberculosis (strain ATCC 25618 / H37Rv).